A 332-amino-acid polypeptide reads, in one-letter code: 2,3-diketo-L-gulonate reductase (332 aa).

The active-site Proton donor is H44. NAD(+) is bound by residues 168 to 174 (ITMVDMS), 224 to 225 (WK), and 304 to 306 (GHE).

Belongs to the LDH2/MDH2 oxidoreductase family. DlgD subfamily. In terms of assembly, homodimer.

Its subcellular location is the cytoplasm. It catalyses the reaction 3-dehydro-L-gulonate + NAD(+) = 2,3-dioxo-L-gulonate + NADH + H(+). The catalysed reaction is 3-dehydro-L-gulonate + NADP(+) = 2,3-dioxo-L-gulonate + NADPH + H(+). Catalyzes the reduction of 2,3-diketo-L-gulonate in the presence of NADH, to form 3-keto-L-gulonate. The sequence is that of 2,3-diketo-L-gulonate reductase from Escherichia coli O127:H6 (strain E2348/69 / EPEC).